We begin with the raw amino-acid sequence, 207 residues long: ATP-dependent dethiobiotin synthetase BioD (207 aa).

An ATP-binding site is contributed by 13–18; the sequence is EVGKTV. T17 is a Mg(2+) binding site. K33 is an active-site residue. Residues D44 and 100 to 103 each bind ATP; that span reads EGAG. D44 and E100 together coordinate Mg(2+).

This sequence belongs to the dethiobiotin synthetase family. As to quaternary structure, homodimer. Mg(2+) serves as cofactor.

The protein resides in the cytoplasm. The enzyme catalyses (7R,8S)-7,8-diammoniononanoate + CO2 + ATP = (4R,5S)-dethiobiotin + ADP + phosphate + 3 H(+). The protein operates within cofactor biosynthesis; biotin biosynthesis; biotin from 7,8-diaminononanoate: step 1/2. In terms of biological role, catalyzes a mechanistically unusual reaction, the ATP-dependent insertion of CO2 between the N7 and N8 nitrogen atoms of 7,8-diaminopelargonic acid (DAPA, also called 7,8-diammoniononanoate) to form a ureido ring. The sequence is that of ATP-dependent dethiobiotin synthetase BioD from Christiangramia forsetii (strain DSM 17595 / CGMCC 1.15422 / KT0803) (Gramella forsetii).